Here is a 511-residue protein sequence, read N- to C-terminus: MAVAQELYGFPASKLDSFVAQWLQPTREWKEEVLETVQTVEQFLRQENFREDRGPARDVRVLKVLKVGCFGNGTVLRSTTDVELVVFLSCFHSFQEEAKHHQAVLRLIQKRMYYCQELMDLGLSNLSVTNRVPSSLIFTIQTRETWETITVTVVPAYRALGPSCPSSEVYANLIKANGYPGNFSPSFSELQRNFVKHRPTKLKSLLRLVKHWYQQYVRDKCPRANLPPLYALELLTVYAWEAGTREDANFRLDEGLATVMELLQDHELLCIYWTKHYTLQHPVIEACVRRQLRGQRPIILDPADPTNNVAEGYRWDIVAQRANQCLKQDCCYDNRDSPVPSWRVKRAPDIQVTVQEWGHSDLTFWVNPYEPIKKLKEKIQLSQGYLGLQRLSFQEPGGERQLIRSHCTLAYYGIFCDTHICLLDTISPEIQVFVKNPDGRSHAYAIHPLDYVLNLKQQIEDRQGLRCQEQRLEFQGHILEDWFDFKSYGIQDSVTVILSKTTEGAAPFVPS.

2 consecutive Ubiquitin-like domains span residues 350-429 (IQVT…ISPE) and 430-506 (IQVF…EGAA).

This sequence belongs to the 2-5A synthase family. In terms of assembly, specifically interacts with the ligand binding domain of the thyroid receptor (TR). TRIP14 does not require the presence of thyroid hormone for its interaction. Binds MBD1.

Its subcellular location is the nucleus. The protein resides in the nucleolus. It localises to the cytoplasm. Does not have 2'-5'-OAS activity, but can bind double-stranded RNA. Displays antiviral activity via an alternative antiviral pathway independent of RNase L. This is 2'-5'-oligoadenylate synthase-like protein 1 (Oasl1) from Mus musculus (Mouse).